The primary structure comprises 241 residues: Linker for activation of T-cells family member 1 (241 aa).

Over 1 to 4 (MEAD) the chain is Extracellular. Residues 5 to 28 (ALSPVELGLLLLPFVVMLLAALCV) form a helical; Signal-anchor for type III membrane protein membrane-spanning segment. S-palmitoyl cysteine attachment occurs at residues C27 and C30. The Cytoplasmic portion of the chain corresponds to 29–241 (RCRELPASYD…PDYENLQELN (213 aa)). Residues S41, S44, S87, S104, S109, and S112 each carry the phosphoserine modification. The segment at 78–139 (QPDLLPIPRS…DDYPEGYLVV (62 aa)) is disordered. Residues 97-115 (MPSSRQNSDDANSVASYEN) show a composition bias toward polar residues. Over residues 124-133 (DEDEDEDDYP) the composition is skewed to acidic residues. Residues 136 to 139 (YLVV) form an interaction with PLCG1 region. Y175 is subject to Phosphotyrosine. Interaction with GRB2, GRAP2 and PIK3R1 regions lie at residues 175 to 178 (YVNV) and 195 to 198 (YVNV). S199, S212, and S215 each carry phosphoserine. The segment at 209–241 (ELASVTSQEVEDEEEEDVDGEEAPDYENLQELN) is disordered. Positions 217–233 (EVEDEEEEDVDGEEAPD) are enriched in acidic residues. At Y234 the chain carries Phosphotyrosine.

When phosphorylated, interacts directly with the PIK3R1 subunit of phosphoinositide 3-kinase and the SH2 domains of GRB2, GRAP, GRAP2, PLCG1 and PLCG2. Interacts indirectly with CBL, SOS, VAV, and LCP2. Interacts with SHB, SKAP2 and CLNK. Interacts with FCGR1A. Interacts with GRB2, PLCG1 and THEMIS upon TCR activation in thymocytes. Interacts with THEMIS2. In terms of processing, phosphorylated on tyrosines by ZAP70 upon TCR activation, or by SYK upon other immunoreceptor activation; which leads to the recruitment of multiple signaling molecules. Is one of the most prominently tyrosine-phosphorylated proteins detected following TCR engagement. May be dephosphorylated by PTPRJ. Post-translationally, palmitoylation of Cys-27 and Cys-30 is required for raft targeting and efficient phosphorylation. Phosphorylated on tyrosines by ZAP70 upon TCR activation, or by SYK upon other immunoreceptor activation; which leads to the recruitment of multiple signaling molecules. Is one of the most prominently tyrosine-phosphorylated proteins detected following TCR engagement. May be dephosphorylated by PTPRJ. Phosphorylated by ITK leading to the recruitment of VAV1 to LAT-containing complexes. In terms of processing, 'Lys-63'-linked ubiquitinated by TRAF6. In terms of tissue distribution, expressed in NK cells. Present in lymph node, spleen and thymus (at protein level).

It is found in the cell membrane. Required for TCR (T-cell antigen receptor)- and pre-TCR-mediated signaling, both in mature T-cells and during their development. Involved in FCGR3 (low affinity immunoglobulin gamma Fc region receptor III)-mediated signaling in natural killer cells and FCER1 (high affinity immunoglobulin epsilon receptor)-mediated signaling in mast cells. Couples activation of these receptors and their associated kinases with distal intracellular events such as mobilization of intracellular calcium stores, PKC activation, MAPK activation or cytoskeletal reorganization through the recruitment of PLCG1, GRB2, GRAP2, and other signaling molecules. The polypeptide is Linker for activation of T-cells family member 1 (Lat) (Rattus norvegicus (Rat)).